The primary structure comprises 248 residues: 3-deoxy-manno-octulosonate cytidylyltransferase (248 aa).

It belongs to the KdsB family.

Its subcellular location is the cytoplasm. The enzyme catalyses 3-deoxy-alpha-D-manno-oct-2-ulosonate + CTP = CMP-3-deoxy-beta-D-manno-octulosonate + diphosphate. It functions in the pathway nucleotide-sugar biosynthesis; CMP-3-deoxy-D-manno-octulosonate biosynthesis; CMP-3-deoxy-D-manno-octulosonate from 3-deoxy-D-manno-octulosonate and CTP: step 1/1. It participates in bacterial outer membrane biogenesis; lipopolysaccharide biosynthesis. Activates KDO (a required 8-carbon sugar) for incorporation into bacterial lipopolysaccharide in Gram-negative bacteria. The protein is 3-deoxy-manno-octulosonate cytidylyltransferase of Salmonella arizonae (strain ATCC BAA-731 / CDC346-86 / RSK2980).